We begin with the raw amino-acid sequence, 415 residues long: Light-independent protochlorophyllide reductase subunit N (415 aa).

Residues Cys16, Cys41, and Cys98 each coordinate [4Fe-4S] cluster.

This sequence belongs to the BchN/ChlN family. As to quaternary structure, protochlorophyllide reductase is composed of three subunits; BchL, BchN and BchB. Forms a heterotetramer of two BchB and two BchN subunits. Requires [4Fe-4S] cluster as cofactor.

It carries out the reaction chlorophyllide a + oxidized 2[4Fe-4S]-[ferredoxin] + 2 ADP + 2 phosphate = protochlorophyllide a + reduced 2[4Fe-4S]-[ferredoxin] + 2 ATP + 2 H2O. Its pathway is porphyrin-containing compound metabolism; bacteriochlorophyll biosynthesis (light-independent). Functionally, component of the dark-operative protochlorophyllide reductase (DPOR) that uses Mg-ATP and reduced ferredoxin to reduce ring D of protochlorophyllide (Pchlide) to form chlorophyllide a (Chlide). This reaction is light-independent. The NB-protein (BchN-BchB) is the catalytic component of the complex. This chain is Light-independent protochlorophyllide reductase subunit N, found in Roseiflexus sp. (strain RS-1).